The sequence spans 103 residues: Large ribosomal subunit protein bL21 (103 aa).

Belongs to the bacterial ribosomal protein bL21 family. Part of the 50S ribosomal subunit. Contacts protein L20.

In terms of biological role, this protein binds to 23S rRNA in the presence of protein L20. This Shewanella denitrificans (strain OS217 / ATCC BAA-1090 / DSM 15013) protein is Large ribosomal subunit protein bL21.